Reading from the N-terminus, the 275-residue chain is NH(3)-dependent NAD(+) synthetase (275 aa).

ATP is bound at residue 43-50 (GISGGVDS). D49 contacts Mg(2+). R145 contacts deamido-NAD(+). T165 serves as a coordination point for ATP. E170 provides a ligand contact to Mg(2+). Residues K178 and D185 each coordinate deamido-NAD(+). 2 residues coordinate ATP: K194 and T216. 265 to 266 (HK) is a binding site for deamido-NAD(+).

It belongs to the NAD synthetase family. In terms of assembly, homodimer.

The enzyme catalyses deamido-NAD(+) + NH4(+) + ATP = AMP + diphosphate + NAD(+) + H(+). It participates in cofactor biosynthesis; NAD(+) biosynthesis; NAD(+) from deamido-NAD(+) (ammonia route): step 1/1. In terms of biological role, catalyzes the ATP-dependent amidation of deamido-NAD to form NAD. Uses ammonia as a nitrogen source. This is NH(3)-dependent NAD(+) synthetase from Shewanella denitrificans (strain OS217 / ATCC BAA-1090 / DSM 15013).